Here is a 623-residue protein sequence, read N- to C-terminus: MTRAIVESIKKRFHELDPCTNSNYSKFKVIHTDLTLTVSFESKTLDGTVVYDLKNLDNASEVILDTSALNIKSTKVNGKEVSFELKPVTPIYGAPLRIPINPNESEIQVEISFTTTDKCTAIQFIQGDTGPYVFSQCEAIHARSLFPCFDTPAVKSPYKFTGHSPAVVTMSGRAQPTDEPNTYHFDQPIPIPSYLVSITSGNLLKAPIGPRSDVYSEEPSLKKCQWEFEKDMENFIQIAEKIVFEYEWSRFDSLVLPSSFPYGGMEIPNMTQLTPTLISGDRTQTKVMAHELAHSWSGNLVTNSSWEHFWLNEGWTVYLERRIIGAIAAAEAKEEGRKDAEKYGEQVRHFNMINGWNELADTCETFDKRYTKLVLDLENGDPDDSFSRIPYEKGFFFLYHLETKLGGIKEFDPFIKYYFNKFKYQSLNTAQFVDTLYEFYEPKGKAEILDNIDWETWLFVSGLPEKPEFDVTLANQVYALVDKWVAYVKNGGELPGDETADFEGEQDMLFLETLTEKFKTLDVKPEIIRLFPEIYPKYGASKNGEIISRWNELLISYGKYSSQDKLVQSFASWLGTIGRMKYVRPGYLLLRKGISHEFALEVFKKYEHIYHPICRTMVKKDLS.

A peptide contacts are provided by residues 136–138 (QCE) and 261–266 (PYGGME). His290 lines the Zn(2+) pocket. Glu291 (proton acceptor) is an active-site residue. Positions 294 and 313 each coordinate Zn(2+). The Proton donor role is filled by Tyr391.

This sequence belongs to the peptidase M1 family. The cofactor is Zn(2+).

It is found in the cytoplasm. Its subcellular location is the nucleus. The enzyme catalyses an epoxide + H2O = an ethanediol. Aminopeptidase that preferentially cleaves di- and tripeptides. Also has low epoxide hydrolase activity (in vitro). Can hydrolyze the epoxide leukotriene LTA(4) but it forms preferentially 5,6-dihydroxy-7,9,11,14-eicosatetraenoic acid rather than the cytokine leukotriene B(4) as the product compared to the homologous mammalian enzyme (in vitro). This chain is Leucine aminopeptidase 2 (LKH1), found in Candida albicans (strain SC5314 / ATCC MYA-2876) (Yeast).